The following is a 188-amino-acid chain: Mitochondrial import receptor subunit TOM20-1 (188 aa).

Over 1–164 (MDKLNFFEEI…VVKNKKSSDE (164 aa)) the chain is Cytoplasmic. A helical transmembrane segment spans residues 165–182 (KYIVMGWVILAIGVVACI). The Mitochondrial intermembrane portion of the chain corresponds to 183 to 188 (SFRKLR).

This sequence belongs to the Tom20 family. As to quaternary structure, forms part of the preprotein translocase complex of the outer mitochondrial membrane (TOM complex) which consists of at least 6 different proteins (TOM5, TOM6, TOM7, TOM20, TOM22/TOM9 and TOM40). Component of a mitochondrial large protein complex that contains, at least, MIC60, DGS1, TOM40, TOM20 proteins, and petC/RISP. In terms of tissue distribution, barely detected in roots.

The protein resides in the mitochondrion outer membrane. In terms of biological role, central component of the receptor complex responsible for the recognition and translocation of cytosolically synthesized mitochondrial preproteins. Together with TOM22 functions as the transit peptide receptor at the surface of the mitochondrion outer membrane and facilitates the movement of preproteins into the translocation pore. This is Mitochondrial import receptor subunit TOM20-1 from Arabidopsis thaliana (Mouse-ear cress).